The chain runs to 157 residues: Ribosome maturation factor RimP (157 aa).

Belongs to the RimP family.

The protein localises to the cytoplasm. Functionally, required for maturation of 30S ribosomal subunits. The protein is Ribosome maturation factor RimP of Enterococcus faecalis (strain ATCC 700802 / V583).